A 100-amino-acid chain; its full sequence is Large ribosomal subunit protein eL30 (100 aa).

This sequence belongs to the eukaryotic ribosomal protein eL30 family.

This chain is Large ribosomal subunit protein eL30, found in Methanococcus maripaludis (strain DSM 14266 / JCM 13030 / NBRC 101832 / S2 / LL).